The chain runs to 139 residues: Acidic phospholipase A2 BpPLA2-TXI (139 aa).

A signal peptide spans 1-16 (MRTLWIMAVLLVGVEG). Cys44 and Cys60 are disulfide-bonded. Gly45 and Gly47 together coordinate Ca(2+). Residue His63 is part of the active site. Position 64 (Asp64) interacts with Ca(2+). 3 disulfide bridges follow: Cys65/Cys139, Cys73/Cys97, and Cys91/Cys102.

Belongs to the phospholipase A2 family. Group II subfamily. D49 sub-subfamily. It depends on Ca(2+) as a cofactor. In terms of tissue distribution, expressed by the venom gland.

It is found in the secreted. The catalysed reaction is a 1,2-diacyl-sn-glycero-3-phosphocholine + H2O = a 1-acyl-sn-glycero-3-phosphocholine + a fatty acid + H(+). Functionally, PLA2 catalyzes the calcium-dependent hydrolysis of the 2-acyl groups in 3-sn-phosphoglycerides. This chain is Acidic phospholipase A2 BpPLA2-TXI, found in Bothrops pauloensis (Neuwied's lancehead).